A 394-amino-acid polypeptide reads, in one-letter code: NAD(P)H-quinone oxidoreductase subunit H (394 aa).

It belongs to the complex I 49 kDa subunit family. In terms of assembly, NDH-1 can be composed of about 15 different subunits; different subcomplexes with different compositions have been identified which probably have different functions.

The protein resides in the cellular thylakoid membrane. It carries out the reaction a plastoquinone + NADH + (n+1) H(+)(in) = a plastoquinol + NAD(+) + n H(+)(out). The enzyme catalyses a plastoquinone + NADPH + (n+1) H(+)(in) = a plastoquinol + NADP(+) + n H(+)(out). NDH-1 shuttles electrons from an unknown electron donor, via FMN and iron-sulfur (Fe-S) centers, to quinones in the respiratory and/or the photosynthetic chain. The immediate electron acceptor for the enzyme in this species is believed to be plastoquinone. Couples the redox reaction to proton translocation, and thus conserves the redox energy in a proton gradient. Cyanobacterial NDH-1 also plays a role in inorganic carbon-concentration. The chain is NAD(P)H-quinone oxidoreductase subunit H from Prochlorococcus marinus (strain MIT 9303).